Consider the following 155-residue polypeptide: Small ribosomal subunit protein uS17 (155 aa).

Ala-2 is subject to N-acetylalanine.

This sequence belongs to the universal ribosomal protein uS17 family.

This chain is Small ribosomal subunit protein uS17, found in Drosophila pseudoobscura pseudoobscura (Fruit fly).